The following is a 287-amino-acid chain: Nucleotide-binding protein Ajs_0902 (287 aa).

10–17 serves as a coordination point for ATP; sequence GMSGSGKS. 59 to 62 serves as a coordination point for GTP; it reads DVRS.

Belongs to the RapZ-like family.

In terms of biological role, displays ATPase and GTPase activities. The chain is Nucleotide-binding protein Ajs_0902 from Acidovorax sp. (strain JS42).